Here is a 208-residue protein sequence, read N- to C-terminus: Sodium/potassium-transporting ATPase subunit beta-1-interacting protein 2 (208 aa).

A run of 4 helical transmembrane segments spans residues 1-23 (MGYC…CVLE), 35-55 (APIL…FGTI), 64-84 (GYAV…CFYL), and 148-168 (VAHS…ACYV).

This sequence belongs to the NKAIN family. Interacts with ATP1B1. Detected in the brain only and specifically in neurons; expressed in multiple regions such as cerebral cortex, thalamus, cerebellum, olfactory bulb and brainstem, but not in the hippocampus.

It localises to the cell membrane. This chain is Sodium/potassium-transporting ATPase subunit beta-1-interacting protein 2 (Nkain2), found in Mus musculus (Mouse).